Reading from the N-terminus, the 446-residue chain is Peptide chain release factor 1, mitochondrial (446 aa).

The N-terminal 62 residues, 1–62 (MSHHLCIWLF…LLNKSWSRGC (62 aa)), are a transit peptide targeting the mitochondrion. The tract at residues 298 to 362 (PKDLRVDTFR…LRARLYQQII (65 aa)) is GGQ domain. The GGQ motif lies at 312–314 (GGQ). Q314 is subject to N5-methylglutamine.

It belongs to the prokaryotic/mitochondrial release factor family. Post-translationally, methylation of glutamine in the GGQ triplet by HEMK1 is conserved from bacteria to mammals.

It localises to the mitochondrion. Functionally, mitochondrial peptide chain release factor that directs the termination of translation in response to the peptide chain non-canonical stop codons AGG and AGA. Non-canonical termination codons AGG and AGA are found at the end of MT-CO1/COX1 and MT-ND6/ND6 open reading frames, respectively. Recognizes non-canonical stop codons via a network of interactions between the codon, MTRF1 and the ribosomal RNA (rRNA): in contrast to other translation release factors, which identify the codon in the A-site via direct interactions of amino acid side chains with the bases, MTRF1 repositions the first 2 bases of the stop codon to use an intricate network of interactions that includes residues of the release factor, the rRNA of the small ribosomal subunit, as well as neighboring bases of the mRNA. The chain is Peptide chain release factor 1, mitochondrial from Mus musculus (Mouse).